Here is a 282-residue protein sequence, read N- to C-terminus: Elongation factor Ts (282 aa).

The involved in Mg(2+) ion dislocation from EF-Tu stretch occupies residues 79–82 (TDFV).

The protein belongs to the EF-Ts family.

It is found in the cytoplasm. Its function is as follows. Associates with the EF-Tu.GDP complex and induces the exchange of GDP to GTP. It remains bound to the aminoacyl-tRNA.EF-Tu.GTP complex up to the GTP hydrolysis stage on the ribosome. This chain is Elongation factor Ts, found in Shewanella sediminis (strain HAW-EB3).